Reading from the N-terminus, the 455-residue chain is MSNRFAVILAAGQGTRMKSKLYKVLHSVCGKPMVQHVVDQVSALGFDEIVTIIGHGADAVKSQLGERVSYALQEEQLGTGHAVLQAESALGGRRGVTIVLCGDTPLLTAETIDHVMSYHEEEQAKATVLTAELADPTGYGRIVRNDKGLVERIVEHKDATSEEKQITEVNTGTYCFDNEALFQALKEVGNNNAQGEYYLPDVIQILQTKGEKVAAYKTAHVEETLGVNDRVALAQAEQVMKRRINEAWMRKGVTFIDPEQTYVSPDATIGQDTVIYPGTMVLGQTTIGEGCVLGPHTELKDSKIGNKTAVKQSVVHNSEVGERVSIGPFSHIRPASMIHDDVRIGNFVEVKKSTIGKESKASHLSYIGDAEVGERVNFSCGSITVNYDGKNKFLTKIEDDAFIGCNSNLIAPVTIGKGALIAAGSTITEDVPSDALSIARARQTNKEHYVTKKNN.

The tract at residues 1–230 (MSNRFAVILA…VEETLGVNDR (230 aa)) is pyrophosphorylase. UDP-N-acetyl-alpha-D-glucosamine contacts are provided by residues 9–12 (LAAG), Lys-23, Gln-73, and 78–79 (GT). Asp-103 provides a ligand contact to Mg(2+). Residues Gly-140, Glu-155, Asn-170, and Asn-228 each coordinate UDP-N-acetyl-alpha-D-glucosamine. Asn-228 is a binding site for Mg(2+). Residues 231-251 (VALAQAEQVMKRRINEAWMRK) form a linker region. Residues 252 to 455 (GVTFIDPEQT…KEHYVTKKNN (204 aa)) form an N-acetyltransferase region. UDP-N-acetyl-alpha-D-glucosamine-binding residues include Arg-333 and Lys-351. His-363 acts as the Proton acceptor in catalysis. UDP-N-acetyl-alpha-D-glucosamine-binding residues include Tyr-366 and Asn-377. Acetyl-CoA is bound by residues 386 to 387 (NY), Ala-423, and Arg-440.

This sequence in the N-terminal section; belongs to the N-acetylglucosamine-1-phosphate uridyltransferase family. The protein in the C-terminal section; belongs to the transferase hexapeptide repeat family. As to quaternary structure, homotrimer. Mg(2+) is required as a cofactor.

It is found in the cytoplasm. It carries out the reaction alpha-D-glucosamine 1-phosphate + acetyl-CoA = N-acetyl-alpha-D-glucosamine 1-phosphate + CoA + H(+). The enzyme catalyses N-acetyl-alpha-D-glucosamine 1-phosphate + UTP + H(+) = UDP-N-acetyl-alpha-D-glucosamine + diphosphate. It functions in the pathway nucleotide-sugar biosynthesis; UDP-N-acetyl-alpha-D-glucosamine biosynthesis; N-acetyl-alpha-D-glucosamine 1-phosphate from alpha-D-glucosamine 6-phosphate (route II): step 2/2. The protein operates within nucleotide-sugar biosynthesis; UDP-N-acetyl-alpha-D-glucosamine biosynthesis; UDP-N-acetyl-alpha-D-glucosamine from N-acetyl-alpha-D-glucosamine 1-phosphate: step 1/1. It participates in bacterial outer membrane biogenesis; LPS lipid A biosynthesis. In terms of biological role, catalyzes the last two sequential reactions in the de novo biosynthetic pathway for UDP-N-acetylglucosamine (UDP-GlcNAc). The C-terminal domain catalyzes the transfer of acetyl group from acetyl coenzyme A to glucosamine-1-phosphate (GlcN-1-P) to produce N-acetylglucosamine-1-phosphate (GlcNAc-1-P), which is converted into UDP-GlcNAc by the transfer of uridine 5-monophosphate (from uridine 5-triphosphate), a reaction catalyzed by the N-terminal domain. The polypeptide is Bifunctional protein GlmU (Halalkalibacterium halodurans (strain ATCC BAA-125 / DSM 18197 / FERM 7344 / JCM 9153 / C-125) (Bacillus halodurans)).